A 970-amino-acid polypeptide reads, in one-letter code: uncharacterized protein (970 aa).

The helical transmembrane segment at 11 to 31 threads the bilayer; that stretch reads WILKIGTILGLVCLGLFGVIF. The interval 366–387 is disordered; that stretch reads ASNSNDNNNQNNNNNNNSSDVI. The span at 367-387 shows a compositional bias: low complexity; it reads SNSNDNNNQNNNNNNNSSDVI. Transmembrane regions (helical) follow at residues 515–535, 537–557, 558–578, 614–634, 645–665, 726–746, 762–782, 789–809, 816–836, 877–897, and 903–923; these read FASS…LLTL, YKLL…SSLV, IFSA…FFVI, FFAN…VIYL, LMAI…IVLI, FLFV…LYLV, SNGI…YCLI, CLSY…VMYL, IDQS…FFAA, IESS…FGGI, and LVIF…AFLP.

The protein localises to the cell membrane. This is an uncharacterized protein from Mycoplasma genitalium (strain ATCC 33530 / DSM 19775 / NCTC 10195 / G37) (Mycoplasmoides genitalium).